Consider the following 420-residue polypeptide: Tyrosine--tRNA ligase (420 aa).

L-tyrosine is bound at residue Tyr33. The 'HIGH' region motif lies at 38–47 (PTADSLHVGH). Residues Tyr167 and Gln171 each coordinate L-tyrosine. The 'KMSKS' region motif lies at 227-231 (KFGKT). Lys230 lines the ATP pocket. In terms of domain architecture, S4 RNA-binding spans 353–419 (LTVADLLVKV…GKRNYALVKV (67 aa)).

It belongs to the class-I aminoacyl-tRNA synthetase family. TyrS type 1 subfamily. As to quaternary structure, homodimer.

The protein resides in the cytoplasm. The enzyme catalyses tRNA(Tyr) + L-tyrosine + ATP = L-tyrosyl-tRNA(Tyr) + AMP + diphosphate + H(+). Its function is as follows. Catalyzes the attachment of tyrosine to tRNA(Tyr) in a two-step reaction: tyrosine is first activated by ATP to form Tyr-AMP and then transferred to the acceptor end of tRNA(Tyr). The polypeptide is Tyrosine--tRNA ligase (Anaeromyxobacter dehalogenans (strain 2CP-1 / ATCC BAA-258)).